Here is a 283-residue protein sequence, read N- to C-terminus: Tetraspanin-33 (283 aa).

Residues 1 to 24 (MARRPGVPAAYGDEFSFVSPLVKY) are Cytoplasmic-facing. A helical transmembrane segment spans residues 25–45 (LLFFFNMLFWVISMVMVAVGV). Over 46-64 (YARLMKHAEAALACLAVDP) the chain is Extracellular. The helical transmembrane segment at 65 to 85 (AILLIVVGVLMFLLTFCGCIG) threads the bilayer. Residues 86–96 (SLRENICLLQT) are Cytoplasmic-facing. Residues 97–117 (FSLCLTIVFLLQLAAGILGFV) traverse the membrane as a helical segment. Topologically, residues 118-235 (FSDKARGKVS…DKLVNWIHSN (118 aa)) are extracellular. Disulfide bonds link C156–C224, C157–C189, C173–C183, and C190–C203. An N-linked (GlcNAc...) asparagine glycan is attached at N172. The helical transmembrane segment at 236-256 (LFLLGGVALGLAIPQLVGILL) threads the bilayer. Over 257–283 (SQVLVNQIKDQIKLQLYNQQHRADPWY) the chain is Cytoplasmic.

The protein belongs to the tetraspanin (TM4SF) family. In terms of assembly, homodimer; disulfide-linked. Interacts (via extracellular domain) with ADAM10 (via extracellular domain). Interacts (via cytoplasmic domain) with PLEKHA7 (via WW domains); the interaction is dependent on PDZD11 being bound to PLEKHA7 and facilitates the docking of ADAM10 to zonula adherens. Predominantly expressed in erythroblasts.

It is found in the cell membrane. It localises to the cell junction. The protein resides in the adherens junction. The protein localises to the cytoplasm. Functionally, part of TspanC8 subgroup, composed of 6 members that interact with the transmembrane metalloprotease ADAM10. This interaction is required for ADAM10 exit from the endoplasmic reticulum and for enzymatic maturation and trafficking to the cell surface as well as substrate specificity. Different TspanC8/ADAM10 complexes have distinct substrates. Plays an important role in normal erythropoiesis. It has a role in the differentiation of erythroid progenitors. Negatively regulates ligand-induced Notch activity probably by regulating ADAM10 activity. Mediates docking of ADAM10 to zonula adherens by interacting with ADAM10 and, in a PDZD11-dependent manner, with the zonula adherens protein PLEKHA7. This is Tetraspanin-33 (Tspan33) from Mus musculus (Mouse).